The chain runs to 450 residues: GTPase Der (450 aa).

2 EngA-type G domains span residues 3 to 170 and 183 to 356; these read PTIA…LATG and LKIA…AECS. Residues 9-16, 56-60, 122-125, 189-196, 236-240, and 301-304 each bind GTP; these read GRPNVGKS, DTGGL, NKVD, GRPNAGKS, DTAGV, and NKID. Positions 357–441 constitute a KH-like domain; sequence LRISTGQLNR…PLNIVFRSTF (85 aa).

It belongs to the TRAFAC class TrmE-Era-EngA-EngB-Septin-like GTPase superfamily. EngA (Der) GTPase family. In terms of assembly, associates with the 50S ribosomal subunit.

Functionally, GTPase that plays an essential role in the late steps of ribosome biogenesis. The chain is GTPase Der from Maridesulfovibrio salexigens (strain ATCC 14822 / DSM 2638 / NCIMB 8403 / VKM B-1763) (Desulfovibrio salexigens).